Here is a 103-residue protein sequence, read N- to C-terminus: Integration host factor subunit beta (103 aa).

This sequence belongs to the bacterial histone-like protein family. Heterodimer of an alpha and a beta chain.

In terms of biological role, this protein is one of the two subunits of integration host factor, a specific DNA-binding protein that functions in genetic recombination as well as in transcriptional and translational control. This Sinorhizobium medicae (strain WSM419) (Ensifer medicae) protein is Integration host factor subunit beta.